The chain runs to 156 residues: Small ribosomal subunit protein uS7 (156 aa).

Belongs to the universal ribosomal protein uS7 family. Part of the 30S ribosomal subunit. Contacts proteins S9 and S11.

In terms of biological role, one of the primary rRNA binding proteins, it binds directly to 16S rRNA where it nucleates assembly of the head domain of the 30S subunit. Is located at the subunit interface close to the decoding center, probably blocks exit of the E-site tRNA. The sequence is that of Small ribosomal subunit protein uS7 from Burkholderia ambifaria (strain MC40-6).